Consider the following 308-residue polypeptide: HPr kinase/phosphorylase (308 aa).

Catalysis depends on residues His138 and Lys159. 153–160 (GESGLGKS) is an ATP binding site. Residue Ser160 coordinates Mg(2+). Asp177 functions as the Proton acceptor; for phosphorylation activity. Proton donor; for dephosphorylation activity in the catalytic mechanism. Residues 201–210 (LEVRGLGLLD) are important for the catalytic mechanism of both phosphorylation and dephosphorylation. Residue Glu202 coordinates Mg(2+). Arg243 is a catalytic residue. Residues 264-269 (QVAAGR) form an important for the catalytic mechanism of dephosphorylation region.

The protein belongs to the HPrK/P family. In terms of assembly, homohexamer. The cofactor is Mg(2+).

The enzyme catalyses [HPr protein]-L-serine + ATP = [HPr protein]-O-phospho-L-serine + ADP + H(+). It catalyses the reaction [HPr protein]-O-phospho-L-serine + phosphate + H(+) = [HPr protein]-L-serine + diphosphate. Catalyzes the ATP- as well as the pyrophosphate-dependent phosphorylation of a specific serine residue in HPr, a phosphocarrier protein of the phosphoenolpyruvate-dependent sugar phosphotransferase system (PTS). HprK/P also catalyzes the pyrophosphate-producing, inorganic phosphate-dependent dephosphorylation (phosphorolysis) of seryl-phosphorylated HPr (P-Ser-HPr). The chain is HPr kinase/phosphorylase from Bordetella avium (strain 197N).